Here is a 198-residue protein sequence, read N- to C-terminus: IMP cyclohydrolase (198 aa).

This sequence belongs to the archaeal IMP cyclohydrolase family.

It catalyses the reaction IMP + H2O = 5-formamido-1-(5-phospho-D-ribosyl)imidazole-4-carboxamide. The protein operates within purine metabolism; IMP biosynthesis via de novo pathway; IMP from 5-formamido-1-(5-phospho-D-ribosyl)imidazole-4-carboxamide: step 1/1. Catalyzes the cyclization of 5-formylamidoimidazole-4-carboxamide ribonucleotide to IMP. The protein is IMP cyclohydrolase of Thermococcus kodakarensis (strain ATCC BAA-918 / JCM 12380 / KOD1) (Pyrococcus kodakaraensis (strain KOD1)).